The sequence spans 188 residues: UPF0397 protein LCK_00164 (188 aa).

The next 5 membrane-spanning stretches (helical) occupy residues 15–35, 48–68, 79–99, 121–141, and 154–174; these read VVATGIGAAVFFVLMKFIAIP, GWLALIAGLFGPVVGLLVGLI, GAPWWSWVIADGVFGLLLGFG, WQAVSNVLVWVIIAPLGDIII, and AVTTVVNTISVAIIGSLLLVA.

Belongs to the UPF0397 family.

The protein localises to the cell membrane. The chain is UPF0397 protein LCK_00164 from Leuconostoc citreum (strain KM20).